The chain runs to 72 residues: Defensin 3 (72 aa).

The signal sequence occupies residues 1 to 25; sequence MEKKMAGFCIFFLVLFLAQEYGVEG. Intrachain disulfides connect cysteine 28–cysteine 72, cysteine 39–cysteine 60, and cysteine 45–cysteine 66.

Belongs to the DEFL family. In terms of assembly, may form dimers. In terms of processing, not glycosylated. Has 4 disulfide bonds.

Its function is as follows. Probably has antifungal activity. The chain is Defensin 3 from Arachis hypogaea (Peanut).